The chain runs to 323 residues: Acetyl esterase (323 aa).

The Involved in the stabilization of the negatively charged intermediate by the formation of the oxyanion hole signature appears at 91–93; sequence HGG. Catalysis depends on residues serine 165, aspartate 262, and histidine 292.

Belongs to the 'GDXG' lipolytic enzyme family. Homodimer. Interacts with MalT and MelA.

The protein localises to the cytoplasm. Functionally, displays esterase activity towards short chain fatty esters (acyl chain length of up to 8 carbons). Able to hydrolyze triacetylglycerol (triacetin) and tributyrylglycerol (tributyrin), but not trioleylglycerol (triolein) or cholesterol oleate. Negatively regulates MalT activity by antagonizing maltotriose binding. Inhibits MelA galactosidase activity. The sequence is that of Acetyl esterase from Salmonella typhi.